The chain runs to 434 residues: D-amino acid dehydrogenase (434 aa).

Residue 3 to 17 participates in FAD binding; that stretch reads VVILGSGVVGVTSAW.

It belongs to the DadA oxidoreductase family. The cofactor is FAD.

The catalysed reaction is a D-alpha-amino acid + A + H2O = a 2-oxocarboxylate + AH2 + NH4(+). It functions in the pathway amino-acid degradation; D-alanine degradation; NH(3) and pyruvate from D-alanine: step 1/1. Oxidative deamination of D-amino acids. In Yersinia pseudotuberculosis serotype O:3 (strain YPIII), this protein is D-amino acid dehydrogenase.